A 122-amino-acid chain; its full sequence is Ribosomal silencing factor RsfS (122 aa).

Belongs to the Iojap/RsfS family. Interacts with ribosomal protein uL14 (rplN).

The protein resides in the cytoplasm. Functions as a ribosomal silencing factor. Interacts with ribosomal protein uL14 (rplN), blocking formation of intersubunit bridge B8. Prevents association of the 30S and 50S ribosomal subunits and the formation of functional ribosomes, thus repressing translation. The chain is Ribosomal silencing factor RsfS from Chromobacterium violaceum (strain ATCC 12472 / DSM 30191 / JCM 1249 / CCUG 213 / NBRC 12614 / NCIMB 9131 / NCTC 9757 / MK).